The chain runs to 399 residues: MAREKFERNKPHVNIGTIGHVDHGKTTLTAAITNVLAKKGQAEKQDYADIDGAPEERERGITINTAHVEYETDTRHYAHVDCPGHADYVKNMITGAAQMDGAILVCAATDGPMAQTKEHILLAKQVGVPALVVALNKCDMVDDEEIIELVEMEVRELLDSYDFPGDDIPVVQVSGLKALEGEAEWEAKIEELMAAVDEAIPEPEREVDKPFLMAVEDVFSITGRGTVATGRIERGKVKVGEEIEIVGIKDARKTTVTGVEMFRKLLEEGMAGDNCGLLLRGIQKEDIERGMVLVKPGSITPHTKFEGEVYVLKKEEGGRHTPFFAGYRPQFYIRTTDVTGQITAFTADDGSAVEMVMPGDRIKMTGELICPVAMENGMRFAIREGGRTIGAGVVSKIIE.

A tr-type G domain is found at 10–204; that stretch reads KPHVNIGTIG…AVDEAIPEPE (195 aa). The G1 stretch occupies residues 19 to 26; that stretch reads GHVDHGKT. GTP is bound at residue 19-26; it reads GHVDHGKT. Residue T26 participates in Mg(2+) binding. The G2 stretch occupies residues 60-64; that stretch reads GITIN. The G3 stretch occupies residues 81 to 84; that stretch reads DCPG. GTP is bound by residues 81 to 85 and 136 to 139; these read DCPGH and NKCD. Positions 136–139 are G4; that stretch reads NKCD. The interval 174–176 is G5; the sequence is SGL.

Belongs to the TRAFAC class translation factor GTPase superfamily. Classic translation factor GTPase family. EF-Tu/EF-1A subfamily. Monomer.

It localises to the cytoplasm. It catalyses the reaction GTP + H2O = GDP + phosphate + H(+). Functionally, GTP hydrolase that promotes the GTP-dependent binding of aminoacyl-tRNA to the A-site of ribosomes during protein biosynthesis. The sequence is that of Elongation factor Tu from Parasynechococcus marenigrum (strain WH8102).